The following is a 299-amino-acid chain: Acetylglutamate kinase (299 aa).

Residues 72–73 (GG), Arg94, and Asn196 each bind substrate.

It belongs to the acetylglutamate kinase family. ArgB subfamily.

It localises to the cytoplasm. It carries out the reaction N-acetyl-L-glutamate + ATP = N-acetyl-L-glutamyl 5-phosphate + ADP. It functions in the pathway amino-acid biosynthesis; L-arginine biosynthesis; N(2)-acetyl-L-ornithine from L-glutamate: step 2/4. In terms of biological role, catalyzes the ATP-dependent phosphorylation of N-acetyl-L-glutamate. The chain is Acetylglutamate kinase from Burkholderia vietnamiensis (strain G4 / LMG 22486) (Burkholderia cepacia (strain R1808)).